The following is a 417-amino-acid chain: Multifunctional CCA protein (417 aa).

Residues G8 and R11 each contribute to the ATP site. CTP contacts are provided by G8 and R11. Residues D21 and D23 each contribute to the Mg(2+) site. Residues R91, R137, and R140 each coordinate ATP. Residues R91, R137, and R140 each coordinate CTP. The region spanning 225–326 is the HD domain; it reads SGIHTLMTLQ…LNVLKKTDAF (102 aa).

The protein belongs to the tRNA nucleotidyltransferase/poly(A) polymerase family. Bacterial CCA-adding enzyme type 1 subfamily. As to quaternary structure, monomer. Can also form homodimers and oligomers. It depends on Mg(2+) as a cofactor. Requires Ni(2+) as cofactor.

The enzyme catalyses a tRNA precursor + 2 CTP + ATP = a tRNA with a 3' CCA end + 3 diphosphate. It catalyses the reaction a tRNA with a 3' CCA end + 2 CTP + ATP = a tRNA with a 3' CCACCA end + 3 diphosphate. Its function is as follows. Catalyzes the addition and repair of the essential 3'-terminal CCA sequence in tRNAs without using a nucleic acid template. Adds these three nucleotides in the order of C, C, and A to the tRNA nucleotide-73, using CTP and ATP as substrates and producing inorganic pyrophosphate. tRNA 3'-terminal CCA addition is required both for tRNA processing and repair. Also involved in tRNA surveillance by mediating tandem CCA addition to generate a CCACCA at the 3' terminus of unstable tRNAs. While stable tRNAs receive only 3'-terminal CCA, unstable tRNAs are marked with CCACCA and rapidly degraded. This chain is Multifunctional CCA protein, found in Neisseria meningitidis serogroup A / serotype 4A (strain DSM 15465 / Z2491).